Consider the following 363-residue polypeptide: UDP-N-acetylglucosamine--N-acetylmuramyl-(pentapeptide) pyrophosphoryl-undecaprenol N-acetylglucosamine transferase (363 aa).

UDP-N-acetyl-alpha-D-glucosamine contacts are provided by residues Thr10–Gly12, Asn124, Ser195, and Gln295.

Belongs to the glycosyltransferase 28 family. MurG subfamily.

It is found in the cell membrane. It carries out the reaction di-trans,octa-cis-undecaprenyl diphospho-N-acetyl-alpha-D-muramoyl-L-alanyl-D-glutamyl-meso-2,6-diaminopimeloyl-D-alanyl-D-alanine + UDP-N-acetyl-alpha-D-glucosamine = di-trans,octa-cis-undecaprenyl diphospho-[N-acetyl-alpha-D-glucosaminyl-(1-&gt;4)]-N-acetyl-alpha-D-muramoyl-L-alanyl-D-glutamyl-meso-2,6-diaminopimeloyl-D-alanyl-D-alanine + UDP + H(+). It participates in cell wall biogenesis; peptidoglycan biosynthesis. Its function is as follows. Cell wall formation. Catalyzes the transfer of a GlcNAc subunit on undecaprenyl-pyrophosphoryl-MurNAc-pentapeptide (lipid intermediate I) to form undecaprenyl-pyrophosphoryl-MurNAc-(pentapeptide)GlcNAc (lipid intermediate II). The chain is UDP-N-acetylglucosamine--N-acetylmuramyl-(pentapeptide) pyrophosphoryl-undecaprenol N-acetylglucosamine transferase from Bacillus subtilis (strain 168).